Here is a 406-residue protein sequence, read N- to C-terminus: Bifunctional enzyme IspD/IspF (406 aa).

A 2-C-methyl-D-erythritol 4-phosphate cytidylyltransferase region spans residues 1–247; that stretch reads MSLIRVNGEA…ALFFNPAKDT (247 aa). Residues 248-406 are 2-C-methyl-D-erythritol 2,4-cyclodiphosphate synthase; the sequence is FIGMGFDTHA…HVSMRYKQKL (159 aa). Aspartate 254 and histidine 256 together coordinate a divalent metal cation. Residues 254-256 and 280-281 each bind 4-CDP-2-C-methyl-D-erythritol 2-phosphate; these read DTH and HS. Histidine 288 contributes to the a divalent metal cation binding site. 4-CDP-2-C-methyl-D-erythritol 2-phosphate-binding positions include 302-304, 307-311, 378-381, phenylalanine 385, and lysine 388; these read DIG, FPDND, and TTME.

In the N-terminal section; belongs to the IspD/TarI cytidylyltransferase family. IspD subfamily. This sequence in the C-terminal section; belongs to the IspF family. It depends on a divalent metal cation as a cofactor.

The catalysed reaction is 2-C-methyl-D-erythritol 4-phosphate + CTP + H(+) = 4-CDP-2-C-methyl-D-erythritol + diphosphate. It carries out the reaction 4-CDP-2-C-methyl-D-erythritol 2-phosphate = 2-C-methyl-D-erythritol 2,4-cyclic diphosphate + CMP. It participates in isoprenoid biosynthesis; isopentenyl diphosphate biosynthesis via DXP pathway; isopentenyl diphosphate from 1-deoxy-D-xylulose 5-phosphate: step 2/6. Its pathway is isoprenoid biosynthesis; isopentenyl diphosphate biosynthesis via DXP pathway; isopentenyl diphosphate from 1-deoxy-D-xylulose 5-phosphate: step 4/6. In terms of biological role, bifunctional enzyme that catalyzes the formation of 4-diphosphocytidyl-2-C-methyl-D-erythritol from CTP and 2-C-methyl-D-erythritol 4-phosphate (MEP) (IspD), and catalyzes the conversion of 4-diphosphocytidyl-2-C-methyl-D-erythritol 2-phosphate (CDP-ME2P) to 2-C-methyl-D-erythritol 2,4-cyclodiphosphate (ME-CPP) with a corresponding release of cytidine 5-monophosphate (CMP) (IspF). The chain is Bifunctional enzyme IspD/IspF from Helicobacter pylori (strain P12).